Reading from the N-terminus, the 195-residue chain is HTH-type transcriptional regulator BetI (195 aa).

The region spanning 8 to 68 (SIRRRQLIDA…ATMRDITSQL (61 aa)) is the HTH tetR-type domain. The H-T-H motif DNA-binding region spans 31–50 (TIAQIARRAGVSTGIISHYF).

The protein operates within amine and polyamine biosynthesis; betaine biosynthesis via choline pathway [regulation]. Functionally, repressor involved in the biosynthesis of the osmoprotectant glycine betaine. It represses transcription of the choline transporter BetT and the genes of BetAB involved in the synthesis of glycine betaine. This is HTH-type transcriptional regulator BetI from Escherichia coli (strain UTI89 / UPEC).